The sequence spans 145 residues: Large ribosomal subunit protein uL13 (145 aa).

The protein belongs to the universal ribosomal protein uL13 family. As to quaternary structure, part of the 50S ribosomal subunit.

In terms of biological role, this protein is one of the early assembly proteins of the 50S ribosomal subunit, although it is not seen to bind rRNA by itself. It is important during the early stages of 50S assembly. The protein is Large ribosomal subunit protein uL13 of Halobacterium salinarum (strain ATCC 700922 / JCM 11081 / NRC-1) (Halobacterium halobium).